Consider the following 239-residue polypeptide: tRNA (guanine-N(1)-)-methyltransferase (239 aa).

S-adenosyl-L-methionine-binding positions include glycine 108 and leucine 127–leucine 132.

It belongs to the RNA methyltransferase TrmD family. As to quaternary structure, homodimer.

It localises to the cytoplasm. It carries out the reaction guanosine(37) in tRNA + S-adenosyl-L-methionine = N(1)-methylguanosine(37) in tRNA + S-adenosyl-L-homocysteine + H(+). Its function is as follows. Specifically methylates guanosine-37 in various tRNAs. The chain is tRNA (guanine-N(1)-)-methyltransferase from Streptococcus pneumoniae serotype 2 (strain D39 / NCTC 7466).